The sequence spans 147 residues: Sentan (147 aa).

Residues 1–36 (MGGCMHSTWDHALHSRGEPRPSEAPASISAPSKMPK) form a disordered region. Positions 8–21 (TWDHALHSRGEPRP) are enriched in basic and acidic residues. Over residues 23-32 (EAPASISAPS) the composition is skewed to low complexity.

Belongs to the S-100 family. As to expression, expressed exclusively in ciliated epithelial cells. Detected in ciliated epithelium of trachea and oviduct (at protein level).

The protein localises to the cell projection. The protein resides in the cilium. Its function is as follows. May be a component of the linker structure that bridges the ciliary membrane and peripheral singlet microtubules. The sequence is that of Sentan (Sntn) from Mus musculus (Mouse).